Consider the following 494-residue polypeptide: Rho GTPase-activating protein 19 (494 aa).

The residue at position 2 (Ala-2) is an N-acetylalanine. A phosphoserine mark is found at Ser-7 and Ser-31. The Rho-GAP domain occupies 102 to 308; the sequence is MSLKRKEKGV…FMIKHSQKLF (207 aa). 2 disordered regions span residues 349–368 and 399–421; these read KSQK…TQHH and QSLT…ARSR. Residues 354–368 show a composition bias toward basic and acidic residues; the sequence is NRVDSCPHQEETQHH. Positions 399 to 415 are enriched in polar residues; sequence QSLTQTPGREPSTSQVQ. Ser-422, Ser-438, and Ser-470 each carry phosphoserine. Thr-478 is modified (phosphothreonine).

As to expression, strong expression in fetal heart, brain, placenta, lung, liver, skeletal muscle, kidney and pancreas. Weak expression in adult pancreas, spleen, thymus, and ovary.

The protein resides in the nucleus. In terms of biological role, GTPase activator for the Rho-type GTPases by converting them to an inactive GDP-bound state. In Homo sapiens (Human), this protein is Rho GTPase-activating protein 19 (ARHGAP19).